Reading from the N-terminus, the 154-residue chain is 3-hydroxyacyl-[acyl-carrier-protein] dehydratase FabZ (154 aa).

H59 is an active-site residue.

It belongs to the thioester dehydratase family. FabZ subfamily.

Its subcellular location is the cytoplasm. The catalysed reaction is a (3R)-hydroxyacyl-[ACP] = a (2E)-enoyl-[ACP] + H2O. In terms of biological role, involved in unsaturated fatty acids biosynthesis. Catalyzes the dehydration of short chain beta-hydroxyacyl-ACPs and long chain saturated and unsaturated beta-hydroxyacyl-ACPs. This Bartonella bacilliformis (strain ATCC 35685 / KC583 / Herrer 020/F12,63) protein is 3-hydroxyacyl-[acyl-carrier-protein] dehydratase FabZ.